The chain runs to 245 residues: uncharacterized protein (245 aa).

2 helical membrane-spanning segments follow: residues L29–M51 and T61–H83.

It localises to the cell membrane. This is an uncharacterized protein from Treponema pallidum (strain Nichols).